The following is a 427-amino-acid chain: MGKRTRRFWALAFSLLMGALIYLGNTPSALAFTEEQKLLLQSWRLVNQSYLDETFNHQNWWLLREKYVKRPLRNREETYTAIEEMLATLDEPFTRLLRPEQYGNLQVTTTGELSGVGLQININPETNQLEIMAPLAGSPAEEAGLQPHDQILAIDGVDTQTLSLDEAAARMRGPKNTKVSLEILSAGTEVPQEFTLTRQLISLSPVAAQLDDSRPGQSVGYIRLSQFSANAYKEVAHALHQLEEQGADGYILDLRNNPGGLLQAGIDIARLWLPESTIVYTVNRQGTQESFTANGEAATDRPLVVLVNQGTASASEILAGALQDNQRATLVGEKTFGKGLIQSLFELSDGAGIAVTVAKYETPQHHDIHKLGIMPDEVVEQPLISFAEITSPADVQYQAALDLLTGGVAIAHKSSSIPAMATAHKPN.

A signal peptide spans 1–31 (MGKRTRRFWALAFSLLMGALIYLGNTPSALA). Positions 104–186 (NLQVTTTGEL…TKVSLEILSA (83 aa)) constitute a PDZ domain. Residues S313, D324, and K338 each act as charge relay system in the active site.

The protein belongs to the peptidase S41A family.

The protein resides in the cellular thylakoid lumen. The catalysed reaction is The enzyme shows specific recognition of a C-terminal tripeptide, Xaa-Yaa-Zaa, in which Xaa is preferably Ala or Leu, Yaa is preferably Ala or Tyr, and Zaa is preferably Ala, but then cleaves at a variable distance from the C-terminus. A typical cleavage is -Ala-Ala-|-Arg-Ala-Ala-Lys-Glu-Asn-Tyr-Ala-Leu-Ala-Ala.. Cleavage of the 16 C-terminal residues from the D1 precursor of photosystem II (PSII). This proteolytic processing is necessary to allow the light-driven assembly of the oxygen-evolving cluster (a tetranuclear manganese), which is responsible for photosynthetic water oxidation. The protein is Carboxyl-terminal-processing protease (ctpA) of Synechocystis sp. (strain ATCC 27184 / PCC 6803 / Kazusa).